A 105-amino-acid chain; its full sequence is Toxin ParE2 (105 aa).

This sequence belongs to the RelE toxin family.

Functionally, toxic component of a type II toxin-antitoxin (TA) system. Its toxic effect is neutralized by coexpression with cognate antitoxin ParD2. The protein is Toxin ParE2 (parE2) of Mycobacterium tuberculosis (strain CDC 1551 / Oshkosh).